The following is a 147-amino-acid chain: Large ribosomal subunit protein uL13 (147 aa).

This sequence belongs to the universal ribosomal protein uL13 family. Part of the 50S ribosomal subunit.

Functionally, this protein is one of the early assembly proteins of the 50S ribosomal subunit, although it is not seen to bind rRNA by itself. It is important during the early stages of 50S assembly. In Deinococcus geothermalis (strain DSM 11300 / CIP 105573 / AG-3a), this protein is Large ribosomal subunit protein uL13.